The primary structure comprises 356 residues: Putative methylthioribose-1-phosphate isomerase (356 aa).

Residues 57–59 (RGA), R100, and Q206 each bind substrate. D247 serves as the catalytic Proton donor. Residue 257 to 258 (NK) participates in substrate binding.

The protein belongs to the eIF-2B alpha/beta/delta subunits family. MtnA subfamily.

The enzyme catalyses 5-(methylsulfanyl)-alpha-D-ribose 1-phosphate = 5-(methylsulfanyl)-D-ribulose 1-phosphate. Catalyzes the interconversion of methylthioribose-1-phosphate (MTR-1-P) into methylthioribulose-1-phosphate (MTRu-1-P). The protein is Putative methylthioribose-1-phosphate isomerase (aIF-2BI) of Pyrococcus abyssi (strain GE5 / Orsay).